A 119-amino-acid chain; its full sequence is Immunoglobulin heavy variable 3-49 (119 aa).

Residues 1 to 19 (MEFGLSWVFLVAILKGVQC) form the signal peptide. The tract at residues 20–44 (EVQLVESGGGLVQPGRSLRLSCTAS) is framework-1. Positions 20–119 (EVQLVESGGG…EDTAVYYCTR (100 aa)) constitute an Ig-like domain. C41 and C117 are joined by a disulfide. Residues 45–52 (GFTFGDYA) are complementarity-determining-1. Residues 53 to 69 (MSWVRQAPGKGLEWVGF) are framework-2. The interval 70-79 (IRSKAYGGTT) is complementarity-determining-2. The tract at residues 80–117 (EYAASVKGRFTISRDDSKSIAYLQMNSLKTEDTAVYYC) is framework-3. Positions 118-119 (TR) are complementarity-determining-3.

As to quaternary structure, immunoglobulins are composed of two identical heavy chains and two identical light chains; disulfide-linked.

The protein localises to the secreted. It is found in the cell membrane. V region of the variable domain of immunoglobulin heavy chains that participates in the antigen recognition. Immunoglobulins, also known as antibodies, are membrane-bound or secreted glycoproteins produced by B lymphocytes. In the recognition phase of humoral immunity, the membrane-bound immunoglobulins serve as receptors which, upon binding of a specific antigen, trigger the clonal expansion and differentiation of B lymphocytes into immunoglobulins-secreting plasma cells. Secreted immunoglobulins mediate the effector phase of humoral immunity, which results in the elimination of bound antigens. The antigen binding site is formed by the variable domain of one heavy chain, together with that of its associated light chain. Thus, each immunoglobulin has two antigen binding sites with remarkable affinity for a particular antigen. The variable domains are assembled by a process called V-(D)-J rearrangement and can then be subjected to somatic hypermutations which, after exposure to antigen and selection, allow affinity maturation for a particular antigen. The sequence is that of Immunoglobulin heavy variable 3-49 from Homo sapiens (Human).